The following is a 337-amino-acid chain: Retrovirus-related Pol polyprotein from type-1 retrotransposable element R1 (337 aa).

One can recognise a Reverse transcriptase domain in the interval 1–118 (GCPQGSISGP…KSARYLGVCM (118 aa)). The tract at residues 253-337 (KRARSCKLMK…ACPCGAPRED (85 aa)) is nucleic acid-binding endonuclease.

It catalyses the reaction DNA(n) + a 2'-deoxyribonucleoside 5'-triphosphate = DNA(n+1) + diphosphate. The protein is Retrovirus-related Pol polyprotein from type-1 retrotransposable element R1 of Nasonia vitripennis (Parasitic wasp).